Reading from the N-terminus, the 141-residue chain is Large ribosomal subunit protein uL11 (141 aa).

Belongs to the universal ribosomal protein uL11 family. In terms of assembly, part of the ribosomal stalk of the 50S ribosomal subunit. Interacts with L10 and the large rRNA to form the base of the stalk. L10 forms an elongated spine to which L12 dimers bind in a sequential fashion forming a multimeric L10(L12)X complex. One or more lysine residues are methylated.

In terms of biological role, forms part of the ribosomal stalk which helps the ribosome interact with GTP-bound translation factors. This Chlamydia trachomatis serovar A (strain ATCC VR-571B / DSM 19440 / HAR-13) protein is Large ribosomal subunit protein uL11.